The primary structure comprises 87 residues: UPF0367 protein P9303_26451 (87 aa).

Belongs to the UPF0367 family.

The polypeptide is UPF0367 protein P9303_26451 (Prochlorococcus marinus (strain MIT 9303)).